Consider the following 406-residue polypeptide: Formate-dependent phosphoribosylglycinamide formyltransferase (406 aa).

N(1)-(5-phospho-beta-D-ribosyl)glycinamide-binding positions include 27–28 and Glu87; that span reads EL. ATP contacts are provided by residues Arg120, Lys162, 167–172, 202–205, and Glu210; these read SSGKGQ and EGFI. The ATP-grasp domain occupies 125 to 320; sequence RLAAETLGLP…EFELHARALL (196 aa). The Mg(2+) site is built by Glu279 and Glu291. N(1)-(5-phospho-beta-D-ribosyl)glycinamide contacts are provided by residues Asp298, Lys367, and 374 to 375; that span reads RR.

The protein belongs to the PurK/PurT family. In terms of assembly, homodimer.

The enzyme catalyses N(1)-(5-phospho-beta-D-ribosyl)glycinamide + formate + ATP = N(2)-formyl-N(1)-(5-phospho-beta-D-ribosyl)glycinamide + ADP + phosphate + H(+). It functions in the pathway purine metabolism; IMP biosynthesis via de novo pathway; N(2)-formyl-N(1)-(5-phospho-D-ribosyl)glycinamide from N(1)-(5-phospho-D-ribosyl)glycinamide (formate route): step 1/1. In terms of biological role, involved in the de novo purine biosynthesis. Catalyzes the transfer of formate to 5-phospho-ribosyl-glycinamide (GAR), producing 5-phospho-ribosyl-N-formylglycinamide (FGAR). Formate is provided by PurU via hydrolysis of 10-formyl-tetrahydrofolate. The chain is Formate-dependent phosphoribosylglycinamide formyltransferase from Bordetella bronchiseptica (strain ATCC BAA-588 / NCTC 13252 / RB50) (Alcaligenes bronchisepticus).